The following is a 51-amino-acid chain: Sperm protamine P1 (51 aa).

2 cysteine pairs are disulfide-bonded: cysteine 7–cysteine 15 and cysteine 40–cysteine 48.

The protein belongs to the protamine P1 family. As to quaternary structure, cross-linked by interchain disulfide bonds around the DNA-helix. Phosphorylated by SRPK1. As to expression, testis.

It localises to the nucleus. Its subcellular location is the chromosome. In terms of biological role, protamines substitute for histones in the chromatin of sperm during the haploid phase of spermatogenesis. They compact sperm DNA into a highly condensed, stable and inactive complex. The chain is Sperm protamine P1 (PRM1) from Bos taurus (Bovine).